The sequence spans 634 residues: Chaperone protein HtpG (634 aa).

Residues 1–344 (MSETATQNKE…SNDLPLNVSR (344 aa)) form an a; substrate-binding region. The b stretch occupies residues 345–561 (EILQDNKVTQ…DFEMGTQMAK (217 aa)). The interval 562-634 (LLEAAGQAAP…GAINELLTKR (73 aa)) is c.

This sequence belongs to the heat shock protein 90 family. In terms of assembly, homodimer.

It localises to the cytoplasm. Functionally, molecular chaperone. Has ATPase activity. In Vibrio atlanticus (strain LGP32) (Vibrio splendidus (strain Mel32)), this protein is Chaperone protein HtpG.